The primary structure comprises 118 residues: Ig heavy chain V region X24 (118 aa).

Positions 1–111 (EVKLLESGGG…GYFDYWGQGT (111 aa)) constitute an Ig-like domain.

The protein is Ig heavy chain V region X24 of Mus musculus (Mouse).